The chain runs to 558 residues: Polypeptide N-acetylgalactosaminyltransferase 16 (558 aa).

Over Met1–Ala6 the chain is Cytoplasmic. A helical; Signal-anchor for type II membrane protein membrane pass occupies residues Asn7–Gln26. The Lumenal portion of the chain corresponds to Asp27 to Thr558. Low complexity predominate over residues Ser34–Arg46. A disordered region spans residues Ser34–Asp53. Intrachain disulfides connect Cys113/Cys340, Cys331/Cys409, Cys441/Cys460, Cys486/Cys506, and Cys530/Cys543. The tract at residues Leu122–Arg227 is catalytic subdomain A. The substrate site is built by Asp163 and Arg188. Asp211 contributes to the Mn(2+) binding site. Ser212 is a substrate binding site. His213 is a Mn(2+) binding site. The catalytic subdomain B stretch occupies residues Pro286–Arg348. Trp317 is a binding site for substrate. His345 contacts Mn(2+). Residues Arg348, His351, and Tyr353 each contribute to the substrate site. In terms of domain architecture, Ricin B-type lectin spans Lys428 to Leu555.

It belongs to the glycosyltransferase 2 family. GalNAc-T subfamily. It depends on Mn(2+) as a cofactor. As to expression, in the CNS, it is predominantly expressed in several distinct hypothalamic, thalamic and amygdaloid nuclei. The most abundant level of expression is in the paraventricular, ventromedial and arcuate nuclei of the hypothalamus, the anterodorsal and parafascicular nuclei of the thalamus and the central, basomedial and medial nuclei of the amygdala. Also expressed in cerebral cortex, lateral septum, habenula and hippocampus.

It localises to the golgi apparatus membrane. The enzyme catalyses L-seryl-[protein] + UDP-N-acetyl-alpha-D-galactosamine = a 3-O-[N-acetyl-alpha-D-galactosaminyl]-L-seryl-[protein] + UDP + H(+). The catalysed reaction is L-threonyl-[protein] + UDP-N-acetyl-alpha-D-galactosamine = a 3-O-[N-acetyl-alpha-D-galactosaminyl]-L-threonyl-[protein] + UDP + H(+). It participates in protein modification; protein glycosylation. Catalyzes the initial reaction in O-linked oligosaccharide biosynthesis, the transfer of an N-acetyl-D-galactosamine residue to a serine or threonine residue on the protein receptor. The protein is Polypeptide N-acetylgalactosaminyltransferase 16 (Galnt16) of Mus musculus (Mouse).